The sequence spans 177 residues: Large ribosomal subunit protein uL6 (177 aa).

It belongs to the universal ribosomal protein uL6 family. In terms of assembly, part of the 50S ribosomal subunit.

Functionally, this protein binds to the 23S rRNA, and is important in its secondary structure. It is located near the subunit interface in the base of the L7/L12 stalk, and near the tRNA binding site of the peptidyltransferase center. In Erythrobacter litoralis (strain HTCC2594), this protein is Large ribosomal subunit protein uL6.